Here is a 410-residue protein sequence, read N- to C-terminus: Elongation factor Tu, chloroplastic (410 aa).

Residues 10-214 (KPHINIGTIG…QVDKYIPTPQ (205 aa)) enclose the tr-type G domain. The interval 19–26 (GHVDHGKT) is G1. Residue 19–26 (GHVDHGKT) participates in GTP binding. T26 lines the Mg(2+) pocket. Residues 60–64 (GITIN) are G2. The interval 81-84 (DCPG) is G3. GTP is bound by residues 81 to 85 (DCPGH) and 136 to 139 (NKED). The tract at residues 136-139 (NKED) is G4. Positions 174-176 (SAL) are G5.

It belongs to the TRAFAC class translation factor GTPase superfamily. Classic translation factor GTPase family. EF-Tu/EF-1A subfamily.

It localises to the plastid. The protein localises to the chloroplast. It carries out the reaction GTP + H2O = GDP + phosphate + H(+). Functionally, GTP hydrolase that promotes the GTP-dependent binding of aminoacyl-tRNA to the A-site of ribosomes during protein biosynthesis. This chain is Elongation factor Tu, chloroplastic (tufA), found in Mesostigma viride (Green alga).